Consider the following 475-residue polypeptide: UDP-glycosyltransferase 76E1 (475 aa).

Histidine 19 (proton acceptor) is an active-site residue. Histidine 19 provides a ligand contact to an anthocyanidin. Catalysis depends on aspartate 109, which acts as the Charge relay. Residues threonine 131, alanine 329, glutamine 331, histidine 346, tryptophan 349, asparagine 350, serine 351, and glutamate 354 each coordinate UDP-alpha-D-glucose. Alanine 369 lines the an anthocyanidin pocket. Residues aspartate 370 and glutamine 371 each coordinate UDP-alpha-D-glucose.

The protein belongs to the UDP-glycosyltransferase family. Expressed in flowers and fruits.

Its subcellular location is the cytoplasm. It is found in the nucleus. It carries out the reaction 2-cis-(+)-abscisate + UDP-alpha-D-glucose = beta-D-glucopyranosyl cis-(+)-abscisate + UDP. Its function is as follows. Glucosyltransferase acting on abscisic acid (ABA) but not on auxin (IAA). The chain is UDP-glycosyltransferase 76E1 from Solanum lycopersicum (Tomato).